We begin with the raw amino-acid sequence, 316 residues long: PDZ and LIM domain protein 3 (316 aa).

In terms of domain architecture, PDZ spans 1-84 (MPQNVVLPGP…QLCLKIDRAE (84 aa)). Phosphoserine is present on residues Ser-18 and Ser-93. Arg-164 is subject to Omega-N-methylarginine. An LIM zinc-binding domain is found at 244–303 (PLCDKCGSGIVGAVVKARDKYRHPECFVCADCNLNLKQKGYFFVEGELYCETHARARTRP).

Interacts with ACTN2. Forms a heterodimer with PDLIM4 (via LIM domain).

It localises to the cytoplasm. Its subcellular location is the myofibril. The protein resides in the sarcomere. It is found in the z line. In terms of biological role, may play a role in the organization of actin filament arrays within muscle cells. The protein is PDZ and LIM domain protein 3 (Pdlim3) of Mus musculus (Mouse).